Here is a 146-residue protein sequence, read N- to C-terminus: Hemoglobin subunit beta (146 aa).

The Globin domain maps to 2 to 146 (QWTAEEKQLI…VAHALARKYH (145 aa)). Heme b-binding residues include His63 and His92.

The protein belongs to the globin family. As to quaternary structure, heterotetramer of two alpha chains and two beta chains. Red blood cells.

Involved in oxygen transport from the lung to the various peripheral tissues. The polypeptide is Hemoglobin subunit beta (HBB) (Apus apus (Common swift)).